A 660-amino-acid polypeptide reads, in one-letter code: MSHVAEEDELGLDQQLAGLDLTSRDSQSGGSTASKGRYIPPHLRNREAAKAFYDKDGSRWSKDKDAYSSFGSRSDTRAKSSFFSDRGGSGSRGRFDERGRSDYESVGSRGGRSGFGKFERGGNSRWCDKADEDDWSKPLPPSERLEQELFSGGNTGINFEKYDDIPVEATGNNCPPHIESFSDVEMGEIIMGNIELTRYTRPTPVQKHAIPIIKEKRDLMACAQTGSGKTAAFLLPILSQIYTDGPGEALRAMKENGKYGRRKQYPISLVLAPTRELAVQIYEEARKFSYRSRVRPCVVYGGADIGQQIRDLERGCHLLVATPGRLVDMMERGKIGLDFCKYLVLDEADRMLDMGFEPQIRRIVEQDTMPPKGVRHTMMFSATFPKEIQMLARDFLDEYIFLAVGRVGSTSENITQKVVWVEEADKRSFLLDLLNATGKDSLILVFVETKKGADSLEDFLYHEGYACTSIHGDRSQRDREEALHQFRSGKSPILVATAVAARGLDISNVKHVINFDLPSDIEEYVHRIGRTGRVGNLGLATSFFNERNINITKDLLDLLVEAKQEVPSWLENMAFEHHYKGGSRGRSKSRFSGGFGARDYRQSSGASSSSFSSGRASNSRSGGGSHGSSRGFGGGSYGGFYNSDGYGGNYSSQGVDWWGN.

The span at 1 to 11 (MSHVAEEDELG) shows a compositional bias: acidic residues. Positions 1–117 (MSHVAEEDEL…SRGGRSGFGK (117 aa)) are disordered. S2 is subject to N-acetylserine. Residues 12–21 (LDQQLAGLDL) are compositionally biased toward low complexity. Residues 24–34 (RDSQSGGSTAS) show a composition bias toward polar residues. Residues 44 to 66 (RNREAAKAFYDKDGSRWSKDKDA) are compositionally biased toward basic and acidic residues. K55 is subject to N6-acetyllysine. Phosphoserine occurs at positions 80, 84, and 89. Basic and acidic residues predominate over residues 93–103 (GRFDERGRSDY). Position 100 is an omega-N-methylarginine (R100). The residue at position 101 (S101) is a Phosphoserine. Y103 carries the post-translational modification Phosphotyrosine. At R109 the chain carries Omega-N-methylarginine. Residue K117 is modified to N6-acetyllysine. The Q motif motif lies at 179-207 (ESFSDVEMGEIIMGNIELTRYTRPTPVQK). S182 is modified (phosphoserine). 199 to 206 (YTRPTPVQ) is an ATP binding site. The region spanning 210–402 (IPIIKEKRDL…RDFLDEYIFL (193 aa)) is the Helicase ATP-binding domain. Residue K214 forms a Glycyl lysine isopeptide (Lys-Gly) (interchain with G-Cter in SUMO2) linkage. An ATP-binding site is contributed by 223-230 (AQTGSGKT). The DEAD box motif lies at 346 to 349 (DEAD). The Helicase C-terminal domain maps to 413-574 (NITQKVVWVE…EVPSWLENMA (162 aa)). S455 is modified (phosphoserine). The residue at position 590 (R590) is an Omega-N-methylarginine. Phosphoserine is present on residues S592, S603, and S610. A disordered region spans residues 598-632 (RDYRQSSGASSSSFSSGRASNSRSGGGSHGSSRGF). The span at 602–620 (QSSGASSSSFSSGRASNSR) shows a compositional bias: low complexity. 2 positions are modified to omega-N-methylarginine: R615 and R630. Positions 621-632 (SGGGSHGSSRGF) are enriched in gly residues.

It belongs to the DEAD box helicase family. DDX3/DED1 subfamily. In terms of tissue distribution, testis.

It catalyses the reaction ATP + H2O = ADP + phosphate + H(+). Putative ATP-dependent RNA helicase. Possible role in a key step of the spermatogenic process. In Mus musculus (Mouse), this protein is Putative ATP-dependent RNA helicase Pl10 (D1Pas1).